A 606-amino-acid polypeptide reads, in one-letter code: Diphthine--ammonia ligase (606 aa).

This sequence in the N-terminal section; belongs to the Diphthine--ammonia ligase family. The protein in the C-terminal section; belongs to the RutC family.

Its subcellular location is the cytoplasm. It is found in the nucleus. The catalysed reaction is diphthine-[translation elongation factor 2] + NH4(+) + ATP = diphthamide-[translation elongation factor 2] + AMP + diphosphate + H(+). The protein operates within protein modification; peptidyl-diphthamide biosynthesis. Its function is as follows. Amidase that catalyzes the last step of diphthamide biosynthesis using ammonium and ATP. Diphthamide biosynthesis consists in the conversion of an L-histidine residue in the translation elongation factor eEF-2 (eft201 or eft202) to diphthamide. Has a role in meiosis. The chain is Diphthine--ammonia ligase (mug71) from Schizosaccharomyces pombe (strain 972 / ATCC 24843) (Fission yeast).